The following is a 1131-amino-acid chain: Probable secreted beta-glucosidase adg3 (1131 aa).

An N-terminal signal peptide occupies residues 1-23 (MPSKIEKICLLLLGFTAASNVNA). N-linked (GlcNAc...) asparagine glycans are attached at residues asparagine 58, asparagine 123, asparagine 252, asparagine 551, asparagine 593, asparagine 631, and asparagine 689. Residues 609–819 (GTTSSTSEIV…SSPISSNSVT (211 aa)) form a disordered region. Positions 623–715 (SNSNTGSLNG…YSDPTTTITS (93 aa)) are enriched in low complexity. Residues 716 to 725 (EVSSILSSPT) show a composition bias toward polar residues. Over residues 726 to 737 (SMQSSVSRPQSS) the composition is skewed to low complexity. A compositionally biased stretch (polar residues) spans 738-763 (GDASGFNTIFTSISQSSDGETSGYTI). 2 stretches are compositionally biased toward low complexity: residues 764 to 773 (SSNSSQNSAS) and 780 to 819 (TSSS…NSVT). N-linked (GlcNAc...) asparagine glycosylation is found at asparagine 766, asparagine 806, and asparagine 857. Over residues 893 to 909 (STSNSGSTSYSIPSSSS) the composition is skewed to low complexity. A disordered region spans residues 893–918 (STSNSGSTSYSIPSSSSRNEGTTSYS). A glycan (N-linked (GlcNAc...) asparagine) is linked at asparagine 920. Residues 977–1027 (LTVKPESSLSSSTTSGLTSSSSTIPSSTRSESNSESASTSSASKRSSSSTS) show a composition bias toward low complexity. The tract at residues 977–1031 (LTVKPESSLSSSTTSGLTSSSSTIPSSTRSESNSESASTSSASKRSSSSTSLVQS) is disordered.

This sequence belongs to the SUN family.

Its subcellular location is the secreted. In terms of biological role, cell surface beta-glucosidase involved in cell wall biogenesis,. This is Probable secreted beta-glucosidase adg3 (adg3) from Schizosaccharomyces pombe (strain 972 / ATCC 24843) (Fission yeast).